A 61-amino-acid polypeptide reads, in one-letter code: Large ribosomal subunit protein uL30 (61 aa).

It belongs to the universal ribosomal protein uL30 family. In terms of assembly, part of the 50S ribosomal subunit.

The polypeptide is Large ribosomal subunit protein uL30 (Thermosipho africanus (strain TCF52B)).